A 209-amino-acid chain; its full sequence is Orotate phosphoribosyltransferase (209 aa).

5-phospho-alpha-D-ribose 1-diphosphate is bound by residues Arg-96, Lys-100, His-102, and 122–130 (EDLISTGGS). An orotate-binding site is contributed by Ser-126.

Belongs to the purine/pyrimidine phosphoribosyltransferase family. PyrE subfamily. As to quaternary structure, homodimer. Requires Mg(2+) as cofactor.

It catalyses the reaction orotidine 5'-phosphate + diphosphate = orotate + 5-phospho-alpha-D-ribose 1-diphosphate. The protein operates within pyrimidine metabolism; UMP biosynthesis via de novo pathway; UMP from orotate: step 1/2. In terms of biological role, catalyzes the transfer of a ribosyl phosphate group from 5-phosphoribose 1-diphosphate to orotate, leading to the formation of orotidine monophosphate (OMP). The polypeptide is Orotate phosphoribosyltransferase (Listeria innocua serovar 6a (strain ATCC BAA-680 / CLIP 11262)).